A 321-amino-acid polypeptide reads, in one-letter code: Glyoxylate/hydroxypyruvate reductase B (321 aa).

Active-site residues include R237 and E266. H285 functions as the Proton donor in the catalytic mechanism.

Belongs to the D-isomer specific 2-hydroxyacid dehydrogenase family. GhrB subfamily. As to quaternary structure, homodimer.

The protein localises to the cytoplasm. It catalyses the reaction glycolate + NADP(+) = glyoxylate + NADPH + H(+). The enzyme catalyses (R)-glycerate + NAD(+) = 3-hydroxypyruvate + NADH + H(+). The catalysed reaction is (R)-glycerate + NADP(+) = 3-hydroxypyruvate + NADPH + H(+). Functionally, catalyzes the NADPH-dependent reduction of glyoxylate and hydroxypyruvate into glycolate and glycerate, respectively. This Erwinia tasmaniensis (strain DSM 17950 / CFBP 7177 / CIP 109463 / NCPPB 4357 / Et1/99) protein is Glyoxylate/hydroxypyruvate reductase B.